The sequence spans 295 residues: ESX-3 secretion-associated protein EspG3 (295 aa).

This sequence belongs to the EspG family. In terms of assembly, interacts specifically with ESX-3-dependent PE/PPE proteins.

The protein resides in the cytoplasm. Specific chaperone for cognate PE/PPE proteins. Plays an important role in preventing aggregation of PE/PPE dimers. This is ESX-3 secretion-associated protein EspG3 from Mycobacterium tuberculosis (strain CDC 1551 / Oshkosh).